The chain runs to 451 residues: BAHD acyltransferase At3g29680 (451 aa).

Residues histidine 161 and aspartate 393 each act as proton acceptor in the active site.

It belongs to the plant acyltransferase family.

The sequence is that of BAHD acyltransferase At3g29680 from Arabidopsis thaliana (Mouse-ear cress).